Consider the following 93-residue polypeptide: Acylphosphatase (93 aa).

One can recognise an Acylphosphatase-like domain in the interval 6–93 (RLVAWVRGQV…RGGYEGFAIR (88 aa)). Residues arginine 21 and asparagine 40 contribute to the active site.

This sequence belongs to the acylphosphatase family.

It catalyses the reaction an acyl phosphate + H2O = a carboxylate + phosphate + H(+). In Streptomyces coelicolor (strain ATCC BAA-471 / A3(2) / M145), this protein is Acylphosphatase (acyP).